The sequence spans 457 residues: NADH-quinone oxidoreductase subunit D (457 aa).

The interval 1–23 (MSTHTETPVDGSAETITGAQPYE) is disordered.

It belongs to the complex I 49 kDa subunit family. In terms of assembly, NDH-1 is composed of 14 different subunits. Subunits NuoB, C, D, E, F, and G constitute the peripheral sector of the complex.

It localises to the cell membrane. It catalyses the reaction a quinone + NADH + 5 H(+)(in) = a quinol + NAD(+) + 4 H(+)(out). Functionally, NDH-1 shuttles electrons from NADH, via FMN and iron-sulfur (Fe-S) centers, to quinones in the respiratory chain. The immediate electron acceptor for the enzyme in this species is believed to be a menaquinone. Couples the redox reaction to proton translocation (for every two electrons transferred, four hydrogen ions are translocated across the cytoplasmic membrane), and thus conserves the redox energy in a proton gradient. The chain is NADH-quinone oxidoreductase subunit D from Parafrankia sp. (strain EAN1pec).